Here is a 66-residue protein sequence, read N- to C-terminus: Large ribosomal subunit protein bL33 (66 aa).

It belongs to the bacterial ribosomal protein bL33 family.

The sequence is that of Large ribosomal subunit protein bL33 from Wolbachia sp. subsp. Brugia malayi (strain TRS).